The sequence spans 157 residues: Small ribosomal subunit protein uS7 (157 aa).

It belongs to the universal ribosomal protein uS7 family. In terms of assembly, part of the 30S ribosomal subunit. Contacts proteins S9 and S11.

One of the primary rRNA binding proteins, it binds directly to 16S rRNA where it nucleates assembly of the head domain of the 30S subunit. Is located at the subunit interface close to the decoding center, probably blocks exit of the E-site tRNA. This is Small ribosomal subunit protein uS7 from Leptospira borgpetersenii serovar Hardjo-bovis (strain JB197).